Reading from the N-terminus, the 144-residue chain is Testis-specific protein TSX (144 aa).

3 disordered regions span residues 1–21 (MSEK…DLPE), 69–99 (EDRV…RDID), and 120–144 (FTDQ…NPTD). Residues 75–90 (TDDEDTCQAGCTEDDE) are compositionally biased toward acidic residues.

As to expression, testis.

May have an RNA/DNA binding role. The protein is Testis-specific protein TSX (Tsx) of Mus musculus (Mouse).